The chain runs to 505 residues: MAQIDFRKKINWHRRYRSPQGVKTEHEILRIFESDRGRIINSPAIRRLQQKTQVFPLERNAAVRTRLTHSMEVQQVGRYIAKEILSRMKELKLLEAYGLDELTGPFESIVEMSCLMHDIGNPPFGHFGEAAINDWFRQRLHPEDAESQPLTDDRCRVRGLRLRDGEEPLNELRRKIRQDLCHFEGNAQGIRLVHTLMRMNLTWAQVGGILKYTRPAWWRGETPETHHYLMKKPGYYLSEEAYIARLRKELNLALYSRFPLTWIMEAADDISYCVADLEDAVEKRIYTLEQLYHHLHDAWGQHEKGSLFSLVVENAWEKSRSNSLSRSTEDQFFMYLRVNTLNKLVPYAAQRFIDNLPAIFAGTFNHALLEDASECSDLLKLYKNVAVKHVFSHPDVERLELQGYRVISGLLEIYRPLLSLSLSDFTELVEKERVKRFPIESRLFHKLSTPHRLAYVEAVSKLPSDSPEFPLWEYYYRCRLLQDYISGMTDLYAWDEYRRLMAVEQ.

The HD domain occupies 66 to 273 (RLTHSMEVQQ…MEAADDISYC (208 aa)).

Belongs to the dGTPase family. Type 1 subfamily. Homotetramer. Requires Mg(2+) as cofactor.

The enzyme catalyses dGTP + H2O = 2'-deoxyguanosine + triphosphate + H(+). Its activity is regulated as follows. Inhibited by the action of reducing agents such as dithiothreitol and 2-mercaptoethanol. In terms of biological role, dGTPase preferentially hydrolyzes dGTP over the other canonical NTPs. This chain is Deoxyguanosinetriphosphate triphosphohydrolase, found in Shigella boydii.